A 119-amino-acid chain; its full sequence is Large ribosomal subunit protein uL18 (119 aa).

Positions Met-1–Thr-20 are disordered. The segment covering Arg-9–Ala-19 has biased composition (basic residues).

This sequence belongs to the universal ribosomal protein uL18 family. In terms of assembly, part of the 50S ribosomal subunit; part of the 5S rRNA/L5/L18/L25 subcomplex. Contacts the 5S and 23S rRNAs.

This is one of the proteins that bind and probably mediate the attachment of the 5S RNA into the large ribosomal subunit, where it forms part of the central protuberance. The protein is Large ribosomal subunit protein uL18 of Chlorobaculum parvum (strain DSM 263 / NCIMB 8327) (Chlorobium vibrioforme subsp. thiosulfatophilum).